Here is a 101-residue protein sequence, read N- to C-terminus: Small ribosomal subunit protein uS14 (101 aa).

This sequence belongs to the universal ribosomal protein uS14 family. In terms of assembly, part of the 30S ribosomal subunit. Contacts proteins S3 and S10.

Binds 16S rRNA, required for the assembly of 30S particles and may also be responsible for determining the conformation of the 16S rRNA at the A site. The protein is Small ribosomal subunit protein uS14 of Albidiferax ferrireducens (strain ATCC BAA-621 / DSM 15236 / T118) (Rhodoferax ferrireducens).